Here is a 145-residue protein sequence, read N- to C-terminus: Immune protein Tsi3 (145 aa).

A signal peptide spans 1–15 (MKTVALILASLALLA). Cysteine 16 carries N-palmitoyl cysteine lipidation. Cysteine 16 is lipidated: S-diacylglycerol cysteine. Residues 53–85 (FDEGGKLRNPRQLEVQRQDAPPPPDLASRRLGD) are disordered. Glutamate 126 is a binding site for Ca(2+).

In terms of assembly, forms a heterotetramer with Tse3 consisting of two Tse3 dimers and two Tsi3 dimers. Formation of the complex inactivates Tse3 enzymatic activity.

Its function is as follows. Immunity protein that plays a role in preventing early activation of toxin Tse3. Occupies Tse3 substrate binding site and prevents the substrate from entering. The protein is Immune protein Tsi3 of Pseudomonas aeruginosa (strain ATCC 15692 / DSM 22644 / CIP 104116 / JCM 14847 / LMG 12228 / 1C / PRS 101 / PAO1).